The following is a 322-amino-acid chain: 4-diphosphocytidyl-2-C-methyl-D-erythritol kinase (322 aa).

Residue Lys-25 is part of the active site. Position 110-120 (110-120 (PVAGGMAGGSA)) interacts with ATP. The active site involves Asp-152.

This sequence belongs to the GHMP kinase family. IspE subfamily.

It carries out the reaction 4-CDP-2-C-methyl-D-erythritol + ATP = 4-CDP-2-C-methyl-D-erythritol 2-phosphate + ADP + H(+). The protein operates within isoprenoid biosynthesis; isopentenyl diphosphate biosynthesis via DXP pathway; isopentenyl diphosphate from 1-deoxy-D-xylulose 5-phosphate: step 3/6. Catalyzes the phosphorylation of the position 2 hydroxy group of 4-diphosphocytidyl-2C-methyl-D-erythritol. The chain is 4-diphosphocytidyl-2-C-methyl-D-erythritol kinase from Mycolicibacterium gilvum (strain PYR-GCK) (Mycobacterium gilvum (strain PYR-GCK)).